A 369-amino-acid polypeptide reads, in one-letter code: Adenosine 3'-phospho 5'-phosphosulfate transporter 2 (369 aa).

Asn-39 carries N-linked (GlcNAc...) asparagine glycosylation. The next 6 helical transmembrane spans lie at 46–66, 79–99, 115–135, 138–158, 168–188, and 191–211; these read LTQFLICVAGVFVFYLIYGYL, YGWYLTLVQFAFYSVFGLIEL, MLIAFLTVGTMGLSNTSLGYL, PTQVIFKCCKLIPVMLGGVFI, VSAAVCMSLGLIWFTLADSTI, and NFNLTGVMLISLALCADAVIG. Residue Asn-222 is glycosylated (N-linked (GlcNAc...) asparagine). 4 helical membrane-spanning segments follow: residues 235-255, 266-285, 292-314, and 317-337; these read IGFVYILLGLSCTSGLGPAVA, GYAFLFSLTGYFGISFVLAL, LLAVTVTTGRKAMTVVLSFLFFA, and FTFQYIWSGLLVVLGIFLNVY.

The protein belongs to the nucleotide-sugar transporter family. SLC35B subfamily.

It localises to the golgi apparatus membrane. The enzyme catalyses 3'-phosphoadenylyl sulfate(in) + adenosine 3',5'-bisphosphate(out) = 3'-phosphoadenylyl sulfate(out) + adenosine 3',5'-bisphosphate(in). In terms of biological role, probably functions as a 3'-phosphoadenylyl sulfate:adenosine 3',5'-bisphosphate antiporter at the Golgi membranes. Mediates the transport from the cytosol into the lumen of the Golgi of 3'-phosphoadenylyl sulfate/adenosine 3'-phospho 5'-phosphosulfate (PAPS), a universal sulfuryl donor for sulfation events that take place in that compartment. The polypeptide is Adenosine 3'-phospho 5'-phosphosulfate transporter 2 (Mus musculus (Mouse)).